Reading from the N-terminus, the 1286-residue chain is Autotransporter adhesin AIDA-I (1286 aa).

Residues 1–49 (MNKAYSIIWSHSRQAWIVASELARGHGFVLAKNTLLVLAVVSTIGNAFA) form the signal peptide. Serine 102, serine 111, and serine 116 each carry an O-alpha-linked (glycero-D-manno-heptose) serine glycan. Threonine 154 carries O-alpha-linked (glycero-D-manno-heptose) threonine glycosylation. O-alpha-linked (glycero-D-manno-heptose) serine glycosylation is found at serine 242, serine 252, serine 334, serine 391, serine 409, serine 539, serine 545, serine 558, serine 569, serine 576, serine 577, and serine 582. The 289-residue stretch at 998–1286 (TQPESASVWM…SGALGIKYSF (289 aa)) folds into the Autotransporter domain. Residues 1006-1012 (WMKITGG) traverse the membrane as a beta stranded segment. Residues 1013–1029 (ISSGKLNDGQNKTTTNQ) are Extracellular-facing. Residues 1030 to 1040 (FINQLGGDIYK) traverse the membrane as a beta stranded segment. The Periplasmic segment spans residues 1041–1047 (FHAEQLG). A beta stranded transmembrane segment spans residues 1048–1058 (DFTLGIMGGYA). The Extracellular portion of the chain corresponds to 1059–1079 (NAKGKTINYTSNKAARNTLDG). A beta stranded transmembrane segment spans residues 1080 to 1087 (YSVGVYGT). Over 1088–1097 (WYQNGENATG) the chain is Periplasmic. A beta stranded transmembrane segment spans residues 1098 to 1108 (LFAETWMQYNW). Residues 1109–1126 (FNASVKGDGLEEEKYNLN) lie on the Extracellular side of the membrane. The beta stranded transmembrane segment at 1127–1138 (GLTASAGGGYNL) threads the bilayer. The Periplasmic segment spans residues 1139–1152 (NVHTWTSPEGITGE). Residues 1153-1164 (FWLQPHLQAVWM) form a beta stranded membrane-spanning segment. At 1165 to 1186 (GVTPDTHQEDNGTVVQGAGKNN) the chain is on the extracellular side. The beta stranded transmembrane segment at 1187–1198 (IQTKAGIRASWK) threads the bilayer. Residues 1199–1210 (VKSTLDKDTGRR) lie on the Periplasmic side of the membrane. A beta stranded membrane pass occupies residues 1211 to 1221 (FRPYIEANWIH). The Extracellular portion of the chain corresponds to 1222-1242 (NTHEFGVKMSDDSQLLSGSRN). Residues 1243 to 1253 (QGEIKTGIEGV) form a beta stranded membrane-spanning segment. Topologically, residues 1254-1259 (ITQNLS) are periplasmic. A beta stranded transmembrane segment spans residues 1260-1267 (VNGGVAYQ). Topologically, residues 1268–1275 (AGGHGSNA) are extracellular. A beta stranded transmembrane segment spans residues 1276–1284 (ISGALGIKY). The Periplasmic portion of the chain corresponds to 1285–1286 (SF).

As to quaternary structure, intercellular AIDA-AIDA interaction is responsible for bacterial autoaggregation. AIDA can also interact with antigen 43 (Ag43), and the resultant intercellular AIDA-Ag43 interaction causes cell aggregation. Glycosylated on serine residues by AHH and AAH2 in the cytoplasm. Glycosylated with an average of 19 heptose residues. Glycosylated with either ADP-L, D-heptose or ADP-D, D-heptose. Glycosylation is required for protein folding/stabilization and resistance to protease-mediated degradation. Glycosylation is required for bacteria adhesion to mammalian cells. Glycosylation is dispensable for cell outer membrane localization. Glycosylation is dispensable for AIDA-mediated cell-cell aggregation and induction of biofilm formation. Glycosylation is dispensable for interaction with Ag43.

Its subcellular location is the periplasm. The protein localises to the secreted. The protein resides in the cell surface. It localises to the cell outer membrane. Functionally, potent bacterial adhesin that mediates bacterial attachment to a broad variety of human and other mammalian cells. Has additional virulence properties, as it is capable of mediating bacterial autoaggregation via intercellular self-recognition and it is a highly efficient initiator of biofilm formation. The polypeptide is Autotransporter adhesin AIDA-I (aidA) (Escherichia coli).